The following is a 386-amino-acid chain: EARP and GARP complex-interacting protein 1 (386 aa).

The residue at position 1 (Met-1) is an N-acetylmethionine. WD repeat units follow at residues 132–172 (GAQG…SQAV), 182–222 (RGQL…QIYC), 226–266 (AHGQ…EPVK), and 270–310 (EHSH…SEPF). Residues 312–332 (HLVDDDDVSDPEEHHTEKSKE) form a disordered region. Phosphoserine is present on Ser-320. The span at 322–332 (PEEHHTEKSKE) shows a compositional bias: basic and acidic residues. A WD 5 repeat occupies 344–384 (EHEDSVYAVDWASADPWLFASLSYDGRLVINRVPRALKYHI).

The protein belongs to the WD repeat EIPR1 family. In terms of assembly, interacts with two multisubunit tethering complexes: EARP composed of VPS50, VPS51, VPS52 and VPS53 subunits and GARP complex composed of VPS51, VPS52, VPS53 and VPS54 subunits. Interacts with SNAP29. Ubiquitous. Highly expressed in brain, adipose tissue, spleen and kidney (at protein level).

It localises to the golgi apparatus. The protein localises to the trans-Golgi network. In terms of biological role, acts as a component of endosomal retrieval machinery that is involved in protein transport from early endosomes to either recycling endosomes or the trans-Golgi network. Mediates the recruitment of Golgi-associated retrograde protein (GARP) complex to the trans-Golgi network and controls early endosome-to-Golgi transport of internalized protein. Promotes the recycling of internalized transferrin receptor (TFRC) to the plasma membrane through interaction with endosome-associated recycling protein (EARP) complex. Controls proper insulin distribution and secretion, and retention of cargo in mature dense core vesicles. Required for the stability of the endosome-associated retrograde protein (EARP) complex subunits and for proper localization and association of EARP with membranes. This chain is EARP and GARP complex-interacting protein 1, found in Rattus norvegicus (Rat).